The primary structure comprises 547 residues: Chaperonin GroEL (547 aa).

ATP-binding positions include 29–32 (TLGP), 86–90 (DGTTT), Gly-413, 479–481 (NAA), and Asp-495.

This sequence belongs to the chaperonin (HSP60) family. Forms a cylinder of 14 subunits composed of two heptameric rings stacked back-to-back. Interacts with the co-chaperonin GroES.

Its subcellular location is the cytoplasm. It carries out the reaction ATP + H2O + a folded polypeptide = ADP + phosphate + an unfolded polypeptide.. Functionally, together with its co-chaperonin GroES, plays an essential role in assisting protein folding. The GroEL-GroES system forms a nano-cage that allows encapsulation of the non-native substrate proteins and provides a physical environment optimized to promote and accelerate protein folding. This chain is Chaperonin GroEL, found in Synechococcus sp. (strain RCC307).